The following is a 330-amino-acid chain: Mucin-15 (330 aa).

An N-terminal signal peptide occupies residues 1–23 (MLTSAKILLISILSSLLLFGSHG). The interval 23–115 (GEEGQKTNTT…SPRSPSTHSF (93 aa)) is disordered. Residues 24–232 (EEGQKTNTTE…SDPQEENRNT (209 aa)) lie on the Extracellular side of the membrane. N-linked (GlcNAc...) asparagine glycans are attached at residues Asn30, Asn44, Asn54, Asn71, Asn79, Asn89, Asn94, Asn122, Asn138, Asn147, Asn154, Asn162, Asn175, Asn214, and Asn221. Polar residues predominate over residues 42-56 (MENQSVPLESKANLT). The segment covering 86-115 (FYSNLSTDNSSRSPSLMPTLSPRSPSTHSF) has biased composition (polar residues). Residues 164–185 (SITVSNLPSGPNTTSVTPMVTE) are disordered. Residues 233–253 (GVVFGAILGAILGASLLSLVG) traverse the membrane as a helical segment. Residues 254-330 (YLLCGKRKTD…DDIPPLRTSV (77 aa)) lie on the Cytoplasmic side of the membrane. A disordered region spans residues 279–330 (LRLDNAPEPYDMSFGNSSYYNPTANDSSTSAGGENAHDSIPMDDIPPLRTSV). The segment covering 292 to 310 (FGNSSYYNPTANDSSTSAG) has biased composition (polar residues).

In terms of processing, highly glycosylated (N- and O-linked carbohydrates). Mainly expressed on apical surfaces of the mammary epithelial cells.

The protein localises to the cell membrane. It is found in the secreted. The chain is Mucin-15 (MUC15) from Bos taurus (Bovine).